A 475-amino-acid chain; its full sequence is NADH-ubiquinone oxidoreductase chain 2 (475 aa).

A run of 13 helical transmembrane segments spans residues 45–65 (LAVL…GIQY), 82–102 (APIV…LTTT), 112–132 (IALL…VNDL), 133–153 (IPLY…TGVY), 162–182 (AAIL…LSSA), 198–220 (TYYS…ALVF), 240–260 (LYIT…FIYL), 262–282 (IHLF…AVAA), 291–311 (IKSI…TAVL), 318–338 (YIYI…ILAI), 365–385 (LCIA…LPGF), 402–422 (LEAL…AYII), and 447–467 (FIIS…PTLL).

The protein belongs to the complex I subunit 2 family.

It localises to the mitochondrion inner membrane. It catalyses the reaction a ubiquinone + NADH + 5 H(+)(in) = a ubiquinol + NAD(+) + 4 H(+)(out). In terms of biological role, core subunit of the mitochondrial membrane respiratory chain NADH dehydrogenase (Complex I) that is believed to belong to the minimal assembly required for catalysis. Complex I functions in the transfer of electrons from NADH to the respiratory chain. The immediate electron acceptor for the enzyme is believed to be ubiquinone. The chain is NADH-ubiquinone oxidoreductase chain 2 (NAD2) from Candida albicans (strain SC5314 / ATCC MYA-2876) (Yeast).